The following is a 278-amino-acid chain: Troponin T, slow skeletal muscle (278 aa).

A compositionally biased stretch (acidic residues) spans 1–37 (MSDTEEQEYEEEQPEEEAAEEEEEAPEEPEPVAEPEE). Disordered regions lie at residues 1-63 (MSDT…RVDF) and 105-153 (RRRS…KKKV). Phosphoserine; by CK2 is present on serine 2. Positions 43-55 (SRPVVPPLIPPKI) are enriched in pro residues. Positions 105–149 (RRRSERAEQQRFRTEKERERQAKLAEEKMRKEEEEAKKRAEDDAK) are enriched in basic and acidic residues.

It belongs to the troponin T family. As to quaternary structure, interacts with TPM3.

Its function is as follows. Troponin T is the tropomyosin-binding subunit of troponin, the thin filament regulatory complex which confers calcium-sensitivity to striated muscle actomyosin ATPase activity. The sequence is that of Troponin T, slow skeletal muscle (TNNT1) from Homo sapiens (Human).